The sequence spans 99 residues: Osteocalcin (99 aa).

The signal sequence occupies residues 1-23; sequence MRTLSLLTLLALTAFCLSDLAGA. The propeptide occupies 24-49; the sequence is KPSDSESDKAFMSKQEGSKVVNRLRR. Positions 50 to 96 constitute a Gla domain; that stretch reads YLNNGLGAPAPYPDPLEPHREVCELNPNCDELADHIGFQDAYKRIYG. Position 58 is a hydroxyproline (Pro58). Residues Glu66, Glu70, Glu73, and Asp79 each contribute to the Ca(2+) site. A 4-carboxyglutamate mark is found at Glu66, Glu70, and Glu73. A disulfide bridge links Cys72 with Cys78.

This sequence belongs to the osteocalcin/matrix Gla protein family. In terms of processing, gamma-carboxyglutamate residues are formed by vitamin K dependent carboxylation by GGCX. These residues are essential for the binding of calcium. Decarboxylation promotes the hormone activity.

Its subcellular location is the secreted. Functionally, the carboxylated form is one of the main organic components of the bone matrix, which constitutes 1-2% of the total bone protein: it acts as a negative regulator of bone formation and is required to limit bone formation without impairing bone resorption or mineralization. The carboxylated form binds strongly to apatite and calcium. In terms of biological role, the uncarboxylated form acts as a hormone secreted by osteoblasts, which regulates different cellular processes, such as energy metabolism, male fertility and brain development. Regulates of energy metabolism by acting as a hormone favoring pancreatic beta-cell proliferation, insulin secretion and sensitivity and energy expenditure. Uncarboxylated osteocalcin hormone also promotes testosterone production in the testes: acts as a ligand for G protein-coupled receptor GPRC6A at the surface of Leydig cells, initiating a signaling response that promotes the expression of enzymes required for testosterone synthesis in a CREB-dependent manner. Also acts as a regulator of brain development: osteocalcin hormone crosses the blood-brain barrier and acts as a ligand for GPR158 on neurons, initiating a signaling response that prevents neuronal apoptosis in the hippocampus, favors the synthesis of all monoamine neurotransmitters and inhibits that of gamma-aminobutyric acid (GABA). Osteocalcin also crosses the placenta during pregnancy and maternal osteocalcin is required for fetal brain development. This Rattus norvegicus (Rat) protein is Osteocalcin (Bglap).